The chain runs to 177 residues: Large ribosomal subunit protein uL10 (177 aa).

It belongs to the universal ribosomal protein uL10 family. In terms of assembly, part of the ribosomal stalk of the 50S ribosomal subunit. The N-terminus interacts with L11 and the large rRNA to form the base of the stalk. The C-terminus forms an elongated spine to which L12 dimers bind in a sequential fashion forming a multimeric L10(L12)X complex.

Its function is as follows. Forms part of the ribosomal stalk, playing a central role in the interaction of the ribosome with GTP-bound translation factors. This is Large ribosomal subunit protein uL10 from Leptospira borgpetersenii serovar Hardjo-bovis (strain JB197).